The chain runs to 303 residues: Bifunctional protein FolD (303 aa).

Residues Gly-165–Ser-167, Ser-190, and Ile-231 each bind NADP(+).

The protein belongs to the tetrahydrofolate dehydrogenase/cyclohydrolase family. In terms of assembly, homodimer.

It carries out the reaction (6R)-5,10-methylene-5,6,7,8-tetrahydrofolate + NADP(+) = (6R)-5,10-methenyltetrahydrofolate + NADPH. The catalysed reaction is (6R)-5,10-methenyltetrahydrofolate + H2O = (6R)-10-formyltetrahydrofolate + H(+). It participates in one-carbon metabolism; tetrahydrofolate interconversion. In terms of biological role, catalyzes the oxidation of 5,10-methylenetetrahydrofolate to 5,10-methenyltetrahydrofolate and then the hydrolysis of 5,10-methenyltetrahydrofolate to 10-formyltetrahydrofolate. In Prochlorococcus marinus (strain NATL2A), this protein is Bifunctional protein FolD.